The following is a 409-amino-acid chain: MSKVKGFIYKPLMVMLALLLVVVSPAGAGAAHSDASSDITLKVAIYPYVPDPARFQAAVLDQWQRQEPGVKLEFTDWDSYSADPPDDLDVFVLDSIFLSHFVDAGYLLPFGSQDIDQAEDVLPFALQGAKRNGEVYGLPQILCTNLLFYRKGDLKIGQVDNIYELYKKIGTSHSEQIPPPQNKGLLINMAGGTTKASMYLEALIDVTGQYTEYDLLPPLDPLNDKVIRGLRLLINMAGEKPSQYVPEDGDAYVRASWFAQGSGRAFIGYSESMMRMGDYAEQVRFKPISSSAGQDIPLFYSDVVSVNSKTAHPELAKKLANVMASADTVEQALRPQADGQYPQYLLPARHQVYEALMQDYPIYSELAQIVNKPSNRVFRLGPEVRTWLKDAKQVLPEALGLTDVSSLAS.

The signal sequence occupies residues 1 to 29 (MSKVKGFIYKPLMVMLALLLVVVSPAGAG). The Nucleophile role is filled by cysteine 143. The active-site Proton acceptor is glutamate 271.

Monomer.

It localises to the secreted. It catalyses the reaction pyridine + thiamine = heteropyrithiamine + 5-(2-hydroxyethyl)-4-methylthiazole. Functionally, degrades thiamine by replacing its thiazole moiety with a wide range of nucleophiles. The chain is Thiaminase-1 from Paenibacillus thiaminolyticus (Bacillus thiaminolyticus).